Reading from the N-terminus, the 360-residue chain is Phosphoserine aminotransferase (360 aa).

Residue Arg41 coordinates L-glutamate. Pyridoxal 5'-phosphate-binding residues include Trp101, Thr152, Asp172, and Gln195. Lys196 carries the post-translational modification N6-(pyridoxal phosphate)lysine. Residue 237–238 (NT) coordinates pyridoxal 5'-phosphate.

The protein belongs to the class-V pyridoxal-phosphate-dependent aminotransferase family. SerC subfamily. Homodimer. Pyridoxal 5'-phosphate serves as cofactor.

Its subcellular location is the cytoplasm. The enzyme catalyses O-phospho-L-serine + 2-oxoglutarate = 3-phosphooxypyruvate + L-glutamate. The catalysed reaction is 4-(phosphooxy)-L-threonine + 2-oxoglutarate = (R)-3-hydroxy-2-oxo-4-phosphooxybutanoate + L-glutamate. The protein operates within amino-acid biosynthesis; L-serine biosynthesis; L-serine from 3-phospho-D-glycerate: step 2/3. It functions in the pathway cofactor biosynthesis; pyridoxine 5'-phosphate biosynthesis; pyridoxine 5'-phosphate from D-erythrose 4-phosphate: step 3/5. Its function is as follows. Catalyzes the reversible conversion of 3-phosphohydroxypyruvate to phosphoserine and of 3-hydroxy-2-oxo-4-phosphonooxybutanoate to phosphohydroxythreonine. In Burkholderia multivorans (strain ATCC 17616 / 249), this protein is Phosphoserine aminotransferase.